Here is a 117-residue protein sequence, read N- to C-terminus: MPRVKRGFKARRRRNKVLKLAKGFRGARSKLFRSATEAVDRALNYAFRDRKVKKRDFRALWITRINAASRLNGLSYSKLIHGLKQAQVEIDRKVLADLAVSDPKGFSEIATLAKAQF.

Belongs to the bacterial ribosomal protein bL20 family.

In terms of biological role, binds directly to 23S ribosomal RNA and is necessary for the in vitro assembly process of the 50S ribosomal subunit. It is not involved in the protein synthesizing functions of that subunit. The chain is Large ribosomal subunit protein bL20 from Geobacter sulfurreducens (strain ATCC 51573 / DSM 12127 / PCA).